Consider the following 60-residue polypeptide: Large ribosomal subunit protein uL30 (60 aa).

This sequence belongs to the universal ribosomal protein uL30 family. Part of the 50S ribosomal subunit.

The protein is Large ribosomal subunit protein uL30 of Albidiferax ferrireducens (strain ATCC BAA-621 / DSM 15236 / T118) (Rhodoferax ferrireducens).